Consider the following 780-residue polypeptide: Tyrosine-protein phosphatase non-receptor type 12 (780 aa).

Methionine 1 carries the N-acetylmethionine modification. A Phosphoserine modification is found at serine 19. One can recognise a Tyrosine-protein phosphatase domain in the interval 28–293; it reads FARDFMRLRR…ELVHRAIAQL (266 aa). Substrate is bound by residues arginine 36, 63–67, aspartate 199, 231–237, and glutamine 278; these read RYKDI and CSAGCGR. The active-site Phosphocysteine intermediate is the cysteine 231. Phosphoserine occurs at positions 332, 435, 449, and 468. Positions 345-438 are interaction with TGFB1I1; that stretch reads VEGDAKEEIL…KLERNLSFEI (94 aa). Residues 502–519 are compositionally biased toward polar residues; sequence QSNKVSVTPPEESQNSDT. Disordered stretches follow at residues 502–639, 657–725, and 744–780; these read QSNK…STES, GTTH…EKCD, and SDKR…SEWT. Phosphothreonine is present on residues threonine 509 and threonine 519. Over residues 521–533 the composition is skewed to basic and acidic residues; sequence PRPDRLPLDEKGH. 2 stretches are compositionally biased toward polar residues: residues 552–577 and 587–601; these read EGNS…TQVE and TSPL…TNPL. Serine 567 carries the post-translational modification Phosphoserine. At threonine 569 the chain carries Phosphothreonine. Phosphoserine is present on residues serine 571 and serine 596. Phosphothreonine is present on threonine 598. Positions 602–613 are enriched in basic and acidic residues; the sequence is HSDDSDSDERNS. A phosphoserine mark is found at serine 603, serine 606, serine 608, and serine 613. Low complexity predominate over residues 622–639; it reads TNISTASATVSAATSTES. 2 positions are modified to phosphoserine: serine 673 and serine 689. Positions 690 to 703 are enriched in polar residues; the sequence is EHNTPVRSEWSELQ. Position 693 is a phosphothreonine (threonine 693). 2 stretches are compositionally biased toward basic and acidic residues: residues 704–725 and 771–780; these read SQER…EKCD and GPRDPPSEWT.

Belongs to the protein-tyrosine phosphatase family. Non-receptor class 4 subfamily. In terms of assembly, interacts with TGFB1I1. Interacts with PSTPIP1. Interacts with PTK2B/PYK2. Interacts with LPXN. Interacts with SORBS2; this interaction greatly enhances WASF1 dephosphorylation and might mediate partial translocation to focal adhesion sites. In terms of processing, phosphorylated by STK24/MST3 and this results in inhibition of its activity.

Its subcellular location is the cytoplasm. It localises to the cell junction. It is found in the focal adhesion. The protein localises to the cell projection. The protein resides in the podosome. It carries out the reaction O-phospho-L-tyrosyl-[protein] + H2O = L-tyrosyl-[protein] + phosphate. Dephosphorylates a range of proteins, and thereby regulates cellular signaling cascades. Dephosphorylates cellular tyrosine kinases, such as ERBB2 and PTK2B/PYK2, and thereby regulates signaling via ERBB2 and PTK2B/PYK2. Selectively dephosphorylates ERBB2 phosphorylated at 'Tyr-1112', 'Tyr-1196', and/or 'Tyr-1248'. In Homo sapiens (Human), this protein is Tyrosine-protein phosphatase non-receptor type 12 (PTPN12).